The following is a 60-amino-acid chain: Large ribosomal subunit protein bL32 (60 aa).

2 disordered regions span residues 1-22 and 34-60; these read MAVQ…HNAL and GETH…KSEA. The span at 9–19 shows a compositional bias: basic residues; that stretch reads SPSKRGMHRSH.

It belongs to the bacterial ribosomal protein bL32 family.

The polypeptide is Large ribosomal subunit protein bL32 (Variovorax paradoxus (strain S110)).